A 222-amino-acid chain; its full sequence is Voltage-dependent calcium channel gamma-1 subunit (222 aa).

Residues 1 to 10 (MSQTKMLKVR) lie on the Cytoplasmic side of the membrane. Residues 11-29 (VTLFCILAGIVLAMTAVVT) traverse the membrane as a helical segment. The Extracellular segment spans residues 30–108 (DHWAVLSPHM…TQKEYSISAA (79 aa)). N-linked (GlcNAc...) asparagine glycosylation is found at N43 and N79. C57 and C80 are joined by a disulfide. The chain crosses the membrane as a helical span at residues 109–129 (AIAIFSLGFIILGSLCVLLSL). Over 130–134 (GKKRD) the chain is Cytoplasmic. A helical transmembrane segment spans residues 135–155 (YLLRPASMFYAFAGLCILVSV). At 156-179 (EVMRQSVKRMIDSEDTVWIEYYYS) the chain is on the extracellular side. The chain crosses the membrane as a helical span at residues 180 to 204 (WSFACACAAFILLFLGGLALLLFSL). At 205-222 (PRMPRNPWESCMDAEPEH) the chain is on the cytoplasmic side.

It belongs to the PMP-22/EMP/MP20 family. CACNG subfamily. In terms of assembly, component of a calcium channel complex consisting of a pore-forming alpha subunit (CACNA1S) and the ancillary subunits CACNB1 or CACNB2, CACNG1 and CACNA2D1. The channel complex contains alpha, beta, gamma and delta subunits in a 1:1:1:1 ratio, i.e. it contains either CACNB1 or CACNB2. N-glycosylated. In terms of tissue distribution, skeletal muscle.

The protein localises to the cell membrane. The protein resides in the sarcolemma. Its function is as follows. Regulatory subunit of the voltage-gated calcium channel that gives rise to L-type calcium currents in skeletal muscle. Regulates channel inactivation kinetics. This Homo sapiens (Human) protein is Voltage-dependent calcium channel gamma-1 subunit (CACNG1).